The sequence spans 485 residues: N-succinylglutamate 5-semialdehyde dehydrogenase (485 aa).

220-225 (GSANTG) lines the NAD(+) pocket. Catalysis depends on residues Glu-243 and Cys-278.

This sequence belongs to the aldehyde dehydrogenase family. AstD subfamily.

It catalyses the reaction N-succinyl-L-glutamate 5-semialdehyde + NAD(+) + H2O = N-succinyl-L-glutamate + NADH + 2 H(+). It functions in the pathway amino-acid degradation; L-arginine degradation via AST pathway; L-glutamate and succinate from L-arginine: step 4/5. Its function is as follows. Catalyzes the NAD-dependent reduction of succinylglutamate semialdehyde into succinylglutamate. The polypeptide is N-succinylglutamate 5-semialdehyde dehydrogenase (Vibrio vulnificus (strain YJ016)).